A 397-amino-acid chain; its full sequence is Formate-dependent phosphoribosylglycinamide formyltransferase (397 aa).

N(1)-(5-phospho-beta-D-ribosyl)glycinamide-binding positions include glutamate 21–leucine 22 and glutamate 81. Residues arginine 113, lysine 154, glutamate 194–valine 197, and glutamate 202 each bind ATP. Residues lysine 118 to leucine 313 enclose the ATP-grasp domain. Mg(2+) contacts are provided by glutamate 272 and glutamate 284. Residues aspartate 291, lysine 361, and arginine 368–arginine 369 each bind N(1)-(5-phospho-beta-D-ribosyl)glycinamide.

The protein belongs to the PurK/PurT family. In terms of assembly, homodimer.

The enzyme catalyses N(1)-(5-phospho-beta-D-ribosyl)glycinamide + formate + ATP = N(2)-formyl-N(1)-(5-phospho-beta-D-ribosyl)glycinamide + ADP + phosphate + H(+). Its pathway is purine metabolism; IMP biosynthesis via de novo pathway; N(2)-formyl-N(1)-(5-phospho-D-ribosyl)glycinamide from N(1)-(5-phospho-D-ribosyl)glycinamide (formate route): step 1/1. Involved in the de novo purine biosynthesis. Catalyzes the transfer of formate to 5-phospho-ribosyl-glycinamide (GAR), producing 5-phospho-ribosyl-N-formylglycinamide (FGAR). Formate is provided by PurU via hydrolysis of 10-formyl-tetrahydrofolate. The chain is Formate-dependent phosphoribosylglycinamide formyltransferase from Sulfurisphaera tokodaii (strain DSM 16993 / JCM 10545 / NBRC 100140 / 7) (Sulfolobus tokodaii).